Reading from the N-terminus, the 246-residue chain is 3-oxoacyl-[acyl-carrier-protein] reductase FabG (246 aa).

NADP(+)-binding positions include 11-14 (GASR), 62-63 (NV), and asparagine 89. Serine 141 serves as a coordination point for substrate. Tyrosine 154 (proton acceptor) is an active-site residue. Residues 154 to 158 (YVATK) and isoleucine 187 contribute to the NADP(+) site.

This sequence belongs to the short-chain dehydrogenases/reductases (SDR) family. In terms of assembly, homotetramer.

It catalyses the reaction a (3R)-hydroxyacyl-[ACP] + NADP(+) = a 3-oxoacyl-[ACP] + NADPH + H(+). The protein operates within lipid metabolism; fatty acid biosynthesis. Its function is as follows. Catalyzes the NADPH-dependent reduction of beta-ketoacyl-ACP substrates to beta-hydroxyacyl-ACP products, the first reductive step in the elongation cycle of fatty acid biosynthesis. The polypeptide is 3-oxoacyl-[acyl-carrier-protein] reductase FabG (fabG) (Staphylococcus aureus (strain Mu50 / ATCC 700699)).